Here is a 335-residue protein sequence, read N- to C-terminus: Dolichyl-diphosphooligosaccharide--protein glycosyltransferase subunit MAGT1 (335 aa).

Residues 1 to 29 form the signal peptide; it reads MASPRWFWSVCAIAAVALLLVSKVPSASA. Over 30–184 the chain is Extracellular; that stretch reads QRKKEMVLSE…DVNIRVIRPP (155 aa). The region spanning 47–175 is the Thioredoxin domain; sequence WANKRPVIRM…IARWIADRTD (129 aa). N-linked (GlcNAc...) asparagine glycosylation occurs at Asn71. Cys87 and Cys90 are disulfide-bonded. The helical transmembrane segment at 185-205 threads the bilayer; it reads NYAGPLMLGLLLAVIGGLVYL. At 206–209 the chain is on the cytoplasmic side; the sequence is RRSN. The chain crosses the membrane as a helical span at residues 210–230; the sequence is MEFLFNKTGWAFAALCFVLAM. Residues 231 to 270 lie on the Extracellular side of the membrane; it reads TSGQMWNHIRGPPYAHKNPHTGHVNYIHGSSQAQFVAETH. A helical membrane pass occupies residues 271–291; it reads IVLLFNGGVTLGMVLLCEAAT. The Cytoplasmic portion of the chain corresponds to 292 to 300; it reads SDMDIGKRR. The helical transmembrane segment at 301–321 threads the bilayer; the sequence is MMCIAGIGLVVLFFSWMLSIF. Residues 322–335 are Extracellular-facing; it reads RSKYHGYPYSFLMS.

It belongs to the OST3/OST6 family. Accessory component of the STT3B-containing form of the oligosaccharyltransferase (OST) complex. OST exists in two different complex forms which contain common core subunits RPN1, RPN2, OST48, OST4, DAD1 and TMEM258, either STT3A or STT3B as catalytic subunits, and form-specific accessory subunits. OST can form stable complexes with the Sec61 complex or with both the Sec61 and TRAP complexes. The association of TUSC3 or MAGT1 with the STT3B-containing complex seems to be mutually exclusvice. As to expression, expressed at high levels in kidney, colon, heart and liver. Expressed at lower levels in intestine, spleen, brain and lung.

It localises to the cell membrane. The protein resides in the endoplasmic reticulum. Its subcellular location is the endoplasmic reticulum membrane. It functions in the pathway protein modification; protein glycosylation. In terms of biological role, accessory component of the STT3B-containing form of the N-oligosaccharyl transferase (OST) complex which catalyzes the transfer of a high mannose oligosaccharide from a lipid-linked oligosaccharide donor to an asparagine residue within an Asn-X-Ser/Thr consensus motif in nascent polypeptide chains. Involved in N-glycosylation of STT3B-dependent substrates. Specifically required for the glycosylation of a subset of acceptor sites that are near cysteine residues; in this function seems to act redundantly with TUSC3. In its oxidized form proposed to form transient mixed disulfides with a glycoprotein substrate to facilitate access of STT3B to the unmodified acceptor site. Also has oxidoreductase-independent functions in the STT3B-containing OST complex possibly involving substrate recognition. Could indirectly play a role in Mg(2+) transport in epithelial cells. This chain is Dolichyl-diphosphooligosaccharide--protein glycosyltransferase subunit MAGT1, found in Mus musculus (Mouse).